An 86-amino-acid polypeptide reads, in one-letter code: Kappa-theraphotoxin-Cg1a 1 (86 aa).

An N-terminal signal peptide occupies residues 1–21 (MKVSVLITLAVLGVMFVWASA). A propeptide spanning residues 22-50 (AELEERGSDQRDSPAWLKSMERIFQSGER) is cleaved from the precursor. Intrachain disulfides connect Cys-52–Cys-66, Cys-59–Cys-71, and Cys-65–Cys-78. The interval 55–56 (MF) is involved in active face. Phe-84 carries the post-translational modification Phenylalanine amide.

It belongs to the neurotoxin 10 (Hwtx-1) family. 28 (Jztx-11) subfamily. Expressed by the venom gland.

The protein localises to the secreted. In terms of biological role, this toxin acts as a voltage-dependent gating-modifier. It inhibits the sodium conductance (IC(50)=124 nM) and slows the fast inactivation (EC(50)=1180 nM) of Nav1.5/SCN5A. It significantly shifts the activation to more depolarized voltages and decreases the deactivation of Nav1.5 currents upon extreme depolarization, but only slightly affects voltage-dependence of steady-state inactivation. In addition, this toxin causes an approximately five-fold decrease in the rate of recovery from inactivation and an approximately 1.9-fold reduction in the closed-state inactivation rate. This toxin integrates the functions of site 3 toxins (alpha-scorpion toxins) with site 4 toxins (beta-scorpion and spider toxins) by targeting multiple sites on Nav1.5. Also shows inhibition of voltage-gated potassium channels (5 uM completely inhibits Kv2.1/KCNB1, whereas 5 uM moderately inhibits Kv4.2/KCND2 Kv4.1/KCND1 channels). This is Kappa-theraphotoxin-Cg1a 1 from Chilobrachys guangxiensis (Chinese earth tiger tarantula).